Consider the following 131-residue polypeptide: MSRASSQQASPTSQTFDPSDLSTYTLDVLHHYPLVDLLQQLNAIPNDLKIPDTYSKVEQAARINVLRAICVGFAEVRRHNDNRTLQRSTMFAVNDAASRIRPSIGLKRTFPTGIFSTTIHGSPSDDDISTS.

Belongs to the herpesviridae small capsomere-interacting protein family. As to quaternary structure, interacts with the major capsid protein/MCP.

The protein resides in the virion. Its subcellular location is the host nucleus. In terms of biological role, participates in the assembly of the infectious particles by decorating the outer surface of the capsid shell and thus forming a layer between the capsid and the tegument. Complexes composed of the major capsid protein and small capsomere-interacting protein/SCP assemble together in the host cytoplasm and are translocated to the nucleus, where they accumulate and participate in capsid assembly. This Gallus gallus (Chicken) protein is Small capsomere-interacting protein.